Consider the following 37-residue polypeptide: Large ribosomal subunit protein bL36c (37 aa).

The protein belongs to the bacterial ribosomal protein bL36 family.

The protein resides in the plastid. Its subcellular location is the chloroplast. This Pinus koraiensis (Korean pine) protein is Large ribosomal subunit protein bL36c.